Consider the following 433-residue polypeptide: Glutamyl-tRNA reductase (433 aa).

Substrate-binding positions include 49-52 (TCNR), Ser-109, 114-116 (EGQ), and Gln-120. Cys-50 functions as the Nucleophile in the catalytic mechanism. Residue 198–203 (GAGRMS) coordinates NADP(+).

This sequence belongs to the glutamyl-tRNA reductase family. Homodimer.

It catalyses the reaction (S)-4-amino-5-oxopentanoate + tRNA(Glu) + NADP(+) = L-glutamyl-tRNA(Glu) + NADPH + H(+). It functions in the pathway porphyrin-containing compound metabolism; protoporphyrin-IX biosynthesis; 5-aminolevulinate from L-glutamyl-tRNA(Glu): step 1/2. It participates in porphyrin-containing compound metabolism; chlorophyll biosynthesis. Its function is as follows. Catalyzes the NADPH-dependent reduction of glutamyl-tRNA(Glu) to glutamate 1-semialdehyde (GSA). In Prochlorococcus marinus subsp. pastoris (strain CCMP1986 / NIES-2087 / MED4), this protein is Glutamyl-tRNA reductase.